We begin with the raw amino-acid sequence, 138 residues long: Large ribosomal subunit protein uL16 (138 aa).

Residues 1 to 19 show a composition bias toward basic residues; sequence MLIPKRVKYRRQHRPHRSG. Positions 1-24 are disordered; that stretch reads MLIPKRVKYRRQHRPHRSGVSKGG.

It belongs to the universal ribosomal protein uL16 family. Part of the 50S ribosomal subunit.

Its function is as follows. Binds 23S rRNA and is also seen to make contacts with the A and possibly P site tRNAs. This chain is Large ribosomal subunit protein uL16, found in Corynebacterium diphtheriae (strain ATCC 700971 / NCTC 13129 / Biotype gravis).